We begin with the raw amino-acid sequence, 116 residues long: Large ribosomal subunit protein bL19 (116 aa).

It belongs to the bacterial ribosomal protein bL19 family.

Its function is as follows. This protein is located at the 30S-50S ribosomal subunit interface and may play a role in the structure and function of the aminoacyl-tRNA binding site. The polypeptide is Large ribosomal subunit protein bL19 (Blochmanniella pennsylvanica (strain BPEN)).